The following is a 359-amino-acid chain: Fe-S cluster assembly protein DRE2 (359 aa).

The interval 1 to 148 (MASTGRVLLL…KPDVAAQQAV (148 aa)) is N-terminal SAM-like domain. Disordered stretches follow at residues 97–116 (NKAW…NDND) and 149–210 (PLKL…PSGV). Residues 149 to 246 (PLKLGRRKKE…EDELLGEDDM (98 aa)) are linker. Basic residues predominate over residues 152-164 (LGRRKKEKERRHP). The span at 167–183 (NDVTNGKVNAPSSNGVN) shows a compositional bias: polar residues. Residues 184–200 (ASTSTATATATTTTTTT) are compositionally biased toward low complexity. C256, C267, C270, and C272 together coordinate [2Fe-2S] cluster. Residues 256 to 272 (CRPKPGKRRRACKDCSC) form a fe-S binding site A region. Residues C322, C325, C333, and C336 each coordinate [4Fe-4S] cluster. 2 consecutive short sequence motifs (cx2C motif) follow at residues 322 to 325 (CGNC) and 333 to 336 (CDGC). Residues 322-336 (CGNCSLGDAFRCDGC) form a fe-S binding site B region.

It belongs to the anamorsin family. In terms of assembly, monomer. Interacts with TAH18. Interacts with MIA40. It depends on [2Fe-2S] cluster as a cofactor. [4Fe-4S] cluster is required as a cofactor.

It is found in the cytoplasm. Its subcellular location is the mitochondrion intermembrane space. In terms of biological role, component of the cytosolic iron-sulfur (Fe-S) protein assembly (CIA) machinery required for the maturation of extramitochondrial Fe-S proteins. Part of an electron transfer chain functioning in an early step of cytosolic Fe-S biogenesis, facilitating the de novo assembly of a [4Fe-4S] cluster on the scaffold complex CFD1-NBP35. Electrons are transferred to DRE2 from NADPH via the FAD- and FMN-containing protein TAH18. TAH18-DRE2 are also required for the assembly of the diferric tyrosyl radical cofactor of ribonucleotide reductase (RNR), probably by providing electrons for reduction during radical cofactor maturation in the catalytic small subunit RNR2. The polypeptide is Fe-S cluster assembly protein DRE2 (Blastomyces gilchristii (strain SLH14081) (Blastomyces dermatitidis)).